A 1348-amino-acid polypeptide reads, in one-letter code: ABC multidrug transporter atrD (1348 aa).

Over residues Met1–Ser10 the composition is skewed to polar residues. Positions Met1 to Asn67 are disordered. Low complexity predominate over residues Glu20 to Pro31. The N-linked (GlcNAc...) asparagine glycan is linked to Asn99. A run of 4 helical transmembrane segments spans residues Ile114–Phe134, Tyr168–Ile188, Lys240–Val260, and Ile268–Ile288. Residues Val118–Asn408 enclose the ABC transmembrane type-1 1 domain. Asn314 carries N-linked (GlcNAc...) asparagine glycosylation. 2 helical membrane passes run Ile344–Gly364 and Phe371–Ile391. In terms of domain architecture, ABC transporter 1 spans Ile443–Ala688. ATP is bound at residue Gly478–Ser485. The N-linked (GlcNAc...) asparagine glycan is linked to Asn550. 2 helical membrane-spanning segments follow: residues Met778–Leu798 and Leu825–Phe845. Residues Leu779 to Lys1068 enclose the ABC transmembrane type-1 2 domain. Asn877 is a glycosylation site (N-linked (GlcNAc...) asparagine). A run of 4 helical transmembrane segments spans residues His892–Gly912, Leu925–Leu947, Ala1015–His1035, and Phe1042–Phe1062. Asn1088 carries an N-linked (GlcNAc...) asparagine glycan. The ABC transporter 2 domain maps to Ile1103 to Leu1341. Gly1138–Ser1145 lines the ATP pocket.

This sequence belongs to the ABC transporter superfamily. ABCB family. Multidrug resistance exporter (TC 3.A.1.201) subfamily.

The protein resides in the cell membrane. Fenamirol efflux transporter activity is inhibited by the cyclosporin derivative PSC 833, nigericin, reserpine and valinomycin. The effect of reserpine is transiant, while that of the cyclosporin derivative PSC 833, nigericin and valinomycin is proportional to the time of exposure. Cyclohexinmide has inhibitory effect only when applied prior to addition of the fungicide. In terms of biological role, pleiotropic ABC efflux transporter involved in the protection of the cells against a wide range of toxic compounds. Confers resistance to the azole fenarimol via efflux transport. May also be involved in the secretion of penicillin. This Emericella nidulans (Aspergillus nidulans) protein is ABC multidrug transporter atrD.